An 84-amino-acid polypeptide reads, in one-letter code: Small ribosomal subunit protein bS16 (84 aa).

The protein belongs to the bacterial ribosomal protein bS16 family.

This is Small ribosomal subunit protein bS16 from Thioalkalivibrio sulfidiphilus (strain HL-EbGR7).